The sequence spans 137 residues: Large ribosomal subunit protein bL12 (137 aa).

Belongs to the bacterial ribosomal protein bL12 family. As to quaternary structure, homodimer. Part of the ribosomal stalk of the 50S ribosomal subunit. Forms a multimeric L10(L12)X complex, where L10 forms an elongated spine to which 2 to 4 L12 dimers bind in a sequential fashion. Binds GTP-bound translation factors.

Forms part of the ribosomal stalk which helps the ribosome interact with GTP-bound translation factors. Is thus essential for accurate translation. The polypeptide is Large ribosomal subunit protein bL12 (Gloeobacter violaceus (strain ATCC 29082 / PCC 7421)).